The primary structure comprises 43 residues: Photosystem II reaction center protein K (43 aa).

The propeptide occupies 1–6 (MSLLLA). Residues 18-38 (IVDVLPIIPVLFLLLAFVWQA) form a helical membrane-spanning segment.

Belongs to the PsbK family. PSII is composed of 1 copy each of membrane proteins PsbA, PsbB, PsbC, PsbD, PsbE, PsbF, PsbH, PsbI, PsbJ, PsbK, PsbL, PsbM, PsbT, PsbX, PsbY, PsbZ, Psb30/Ycf12, at least 3 peripheral proteins of the oxygen-evolving complex and a large number of cofactors. It forms dimeric complexes.

The protein resides in the plastid. The protein localises to the chloroplast thylakoid membrane. Functionally, one of the components of the core complex of photosystem II (PSII). PSII is a light-driven water:plastoquinone oxidoreductase that uses light energy to abstract electrons from H(2)O, generating O(2) and a proton gradient subsequently used for ATP formation. It consists of a core antenna complex that captures photons, and an electron transfer chain that converts photonic excitation into a charge separation. The protein is Photosystem II reaction center protein K of Oltmannsiellopsis viridis (Marine flagellate).